Here is a 130-residue protein sequence, read N- to C-terminus: U-scoloptoxin(17)-Er1a (130 aa).

An N-terminal signal peptide occupies residues 1-18; sequence MKLLVFALFLQVVQLSLA.

It belongs to the scoloptoxin-17 family. Contains 4 disulfide bonds. As to expression, expressed by the venom gland.

The protein resides in the secreted. This Ethmostigmus rubripes (Giant centipede) protein is U-scoloptoxin(17)-Er1a.